We begin with the raw amino-acid sequence, 272 residues long: Ribosomal RNA small subunit methyltransferase A (272 aa).

Residues Asn-18, Leu-20, Gly-45, Glu-66, Asp-91, and Asn-113 each coordinate S-adenosyl-L-methionine.

Belongs to the class I-like SAM-binding methyltransferase superfamily. rRNA adenine N(6)-methyltransferase family. RsmA subfamily.

The protein resides in the cytoplasm. It catalyses the reaction adenosine(1518)/adenosine(1519) in 16S rRNA + 4 S-adenosyl-L-methionine = N(6)-dimethyladenosine(1518)/N(6)-dimethyladenosine(1519) in 16S rRNA + 4 S-adenosyl-L-homocysteine + 4 H(+). In terms of biological role, specifically dimethylates two adjacent adenosines (A1518 and A1519) in the loop of a conserved hairpin near the 3'-end of 16S rRNA in the 30S particle. May play a critical role in biogenesis of 30S subunits. The chain is Ribosomal RNA small subunit methyltransferase A from Yersinia pestis bv. Antiqua (strain Antiqua).